Here is a 204-residue protein sequence, read N- to C-terminus: Large ribosomal subunit protein bL25 (204 aa).

Belongs to the bacterial ribosomal protein bL25 family. CTC subfamily. As to quaternary structure, part of the 50S ribosomal subunit; part of the 5S rRNA/L5/L18/L25 subcomplex. Contacts the 5S rRNA. Binds to the 5S rRNA independently of L5 and L18.

Functionally, this is one of the proteins that binds to the 5S RNA in the ribosome where it forms part of the central protuberance. The polypeptide is Large ribosomal subunit protein bL25 (Bordetella bronchiseptica (strain ATCC BAA-588 / NCTC 13252 / RB50) (Alcaligenes bronchisepticus)).